We begin with the raw amino-acid sequence, 893 residues long: Alpha-actinin-1 (893 aa).

Residues 1 to 248 are actin-binding; it reads MDHHYDPQQT…IMTYVSSFYH (248 aa). Tyr13 is subject to Phosphotyrosine; by FAK1. Calponin-homology (CH) domains follow at residues 32–136 and 145–251; these read KQQR…LRFA and TSAK…HAFS. Spectrin repeat units follow at residues 275–385, 395–500, 510–621, and 631–734; these read QLME…WLLN, HLAE…ALER, QLYL…ALME, and RLRK…EVEN. 2 consecutive EF-hand domains span residues 747–782 and 788–823; these read EQMNEFRASFNHFDRDHSGTLGPEEFKACLISLGYD and QGEAEFARIMSIVDPNRMGVVTFQAFIDFMSRETAD. Positions 760, 762, 764, 766, and 771 each coordinate Ca(2+).

It belongs to the alpha-actinin family. Homodimer; antiparallel. Interacts with PDLIM4 (via PDZ domain).

Its subcellular location is the cytoplasm. The protein localises to the cytoskeleton. It is found in the myofibril. The protein resides in the sarcomere. It localises to the z line. Its subcellular location is the cell membrane. The protein localises to the cell junction. It is found in the cell projection. The protein resides in the ruffle. Functionally, F-actin cross-linking protein is thought to anchor actin to a variety of intracellular structures. This is a bundling protein. The sequence is that of Alpha-actinin-1 (ACTN1) from Gallus gallus (Chicken).